The primary structure comprises 531 residues: Bifunctional protein TrpGD (531 aa).

The Glutamine amidotransferase type-1 domain maps to 3–196; that stretch reads DILLLDNIDS…LAWAQQKLEP (194 aa). 57 to 59 lines the L-glutamine pocket; it reads GPG. Residue cysteine 84 is the Nucleophile; for GATase activity of the active site. L-glutamine-binding positions include glutamine 88 and 134 to 135; that span reads SL. Active-site for GATase activity residues include histidine 170 and glutamate 172. The anthranilate phosphoribosyltransferase stretch occupies residues 202–531; it reads PILEKLYQAQ…DRVTALAARG (330 aa).

This sequence in the C-terminal section; belongs to the anthranilate phosphoribosyltransferase family. Heterotetramer consisting of two non-identical subunits: a beta subunit (TrpG) and a large alpha subunit (TrpE).

It carries out the reaction chorismate + L-glutamine = anthranilate + pyruvate + L-glutamate + H(+). The enzyme catalyses N-(5-phospho-beta-D-ribosyl)anthranilate + diphosphate = 5-phospho-alpha-D-ribose 1-diphosphate + anthranilate. The protein operates within amino-acid biosynthesis; L-tryptophan biosynthesis; L-tryptophan from chorismate: step 1/5. It participates in amino-acid biosynthesis; L-tryptophan biosynthesis; L-tryptophan from chorismate: step 2/5. Its activity is regulated as follows. Cooperatively feedback inhibited by tryptophan. Functionally, part of a heterotetrameric complex that catalyzes the two-step biosynthesis of anthranilate, an intermediate in the biosynthesis of L-tryptophan. In the first step, the glutamine-binding beta subunit (TrpG) of anthranilate synthase (AS) provides the glutamine amidotransferase activity which generates ammonia as a substrate that, along with chorismate, is used in the second step, catalyzed by the large alpha subunit of AS (TrpE) to produce anthranilate. In the absence of TrpG, TrpE can synthesize anthranilate directly from chorismate and high concentrations of ammonia. In addition to synthesizing anthranilate, it also catalyzes the second step of the pathway, the transfer of the phosphoribosyl group of 5-phosphorylribose-1-pyrophosphate (PRPP) to anthranilate. The sequence is that of Bifunctional protein TrpGD (trpGD) from Escherichia coli (strain K12).